The following is a 359-amino-acid chain: Phospho-N-acetylmuramoyl-pentapeptide-transferase (359 aa).

Residues Met1–Arg25 are Periplasmic-facing. A helical membrane pass occupies residues Ser26–Leu48. Topologically, residues Arg49–Pro74 are cytoplasmic. Residues Lys70 and Thr75 each coordinate muraymycin D2. The chain crosses the membrane as a helical span at residues Thr75–Leu92. Residues Met93 to Lys98 lie on the Periplasmic side of the membrane. The chain crosses the membrane as a helical span at residues Tyr99–Val120. Residues Lys121–Ile130 lie on the Cytoplasmic side of the membrane. Residues Lys131–Ala152 traverse the membrane as a helical segment. Topologically, residues Asp153–Val172 are periplasmic. A helical membrane pass occupies residues Leu173 to Gly194. Muraymycin D2 contacts are provided by Asn190, Asp193, and Asp196. At Leu195–Gly197 the chain is on the cytoplasmic side. A helical transmembrane segment spans residues Leu198–Gly218. Residues His219–Tyr233 are Periplasmic-facing. The chain crosses the membrane as a helical span at residues Ala234–Asn255. Residues Ser256–Gly264 are Cytoplasmic-facing. Muraymycin D2 is bound by residues Gly264 and Ser268. A helical membrane pass occupies residues Asp265 to Leu280. At Leu281–Ser284 the chain is on the periplasmic side. Residues Glu285–Arg310 traverse the membrane as a helical segment. Residues Gln305 and Ala321 each contribute to the muraymycin D2 site. Residues Trp311 to Leu332 lie on the Cytoplasmic side of the membrane. Residues Pro333–Met355 traverse the membrane as a helical segment. Over Leu356–Arg359 the chain is Periplasmic.

Belongs to the glycosyltransferase 4 family. MraY subfamily. In terms of assembly, homodimer. Mg(2+) serves as cofactor. The cofactor is Mn(2+).

The protein resides in the cell inner membrane. It carries out the reaction UDP-N-acetyl-alpha-D-muramoyl-L-alanyl-gamma-D-glutamyl-meso-2,6-diaminopimeloyl-D-alanyl-D-alanine + di-trans,octa-cis-undecaprenyl phosphate = di-trans,octa-cis-undecaprenyl diphospho-N-acetyl-alpha-D-muramoyl-L-alanyl-D-glutamyl-meso-2,6-diaminopimeloyl-D-alanyl-D-alanine + UMP. The protein operates within cell wall biogenesis; peptidoglycan biosynthesis. Its activity is regulated as follows. Inhibited by natural nucleoside antibiotics including tunicamycin, capuramycin and muraymycin. Usually the cofactor magnesium is not required for antibiotic binding. Catalyzes the initial step of the lipid cycle reactions in the biosynthesis of the cell wall peptidoglycan: transfers peptidoglycan precursor phospho-MurNAc-pentapeptide from UDP-MurNAc-pentapeptide onto the lipid carrier undecaprenyl phosphate, yielding undecaprenyl-pyrophosphoryl-MurNAc-pentapeptide, known as lipid I. The chain is Phospho-N-acetylmuramoyl-pentapeptide-transferase from Aquifex aeolicus (strain VF5).